A 151-amino-acid polypeptide reads, in one-letter code: Protein PLANT CADMIUM RESISTANCE 1 (151 aa).

2 consecutive transmembrane segments (helical) span residues 31-47 and 54-71; these read ITLC…AEIV and CCAA…TSCG.

It belongs to the cornifelin family. In terms of assembly, homopentamer. Expressed in aerial part, but not in roots. Detected in the guard and mesophyll cells.

Its subcellular location is the cell membrane. Its function is as follows. Involved in glutathione-independent cadmium resistance. Reduces cadmium uptake rather than activating efflux, but is not closely coupled to calcium transporter. The protein is Protein PLANT CADMIUM RESISTANCE 1 (PCR1) of Arabidopsis thaliana (Mouse-ear cress).